A 299-amino-acid polypeptide reads, in one-letter code: Peroxisomal biogenesis factor 19 (299 aa).

Positions 1-63 (MAAAEEDYGV…SPGDTAKDSL (63 aa)) are disordered. Alanine 2 is modified (N-acetylalanine). The segment at 2–56 (AAAEEDYGVGAEADRELEELLESALDDFDKAKPSPAPPSTTTAPDASGPQKRSPG) is docking to the peroxisome membrane and binding to PEX3. Positions 2-91 (AAAEEDYGVG…QATAEFEKAM (90 aa)) are necessary for PEX19 function on peroxisome biogenesis. The segment covering 16–27 (RELEELLESALD) has biased composition (acidic residues). Phosphoserine occurs at positions 35, 54, and 66. Threonine 236 is subject to Phosphothreonine. Cysteine 296 bears the Cysteine methyl ester mark. Cysteine 296 is lipidated: S-farnesyl cysteine. Residues 297-299 (LIM) constitute a propeptide, removed in mature form.

Belongs to the peroxin-19 family. As to quaternary structure, interacts with a broad range of peroxisomal membrane proteins, including PEX3, PEX10, PEX11A, PEX11B, PEX12, PEX13, PEX14 and PEX16, PXMP2/PMP22, PXMP4/PMP24, SLC25A17/PMP34, ABCD1/ALDP, ABCD2/ALDRP, and ABCD3/PMP70. Also interacts with the tumor suppressor CDKN2A/p19ARF.

It is found in the cytoplasm. Its subcellular location is the peroxisome membrane. In terms of biological role, necessary for early peroxisomal biogenesis. Acts both as a cytosolic chaperone and as an import receptor for peroxisomal membrane proteins (PMPs). Binds and stabilizes newly synthesized PMPs in the cytoplasm by interacting with their hydrophobic membrane-spanning domains, and targets them to the peroxisome membrane by binding to the integral membrane protein PEX3. Excludes CDKN2A from the nucleus and prevents its interaction with MDM2, which results in active degradation of TP53. This chain is Peroxisomal biogenesis factor 19 (PEX19), found in Pongo abelii (Sumatran orangutan).